The sequence spans 32 residues: Cytochrome b6-f complex subunit 8 (32 aa).

A helical transmembrane segment spans residues isoleucine 6 to valine 26.

It belongs to the PetN family. The 4 large subunits of the cytochrome b6-f complex are cytochrome b6, subunit IV (17 kDa polypeptide, PetD), cytochrome f and the Rieske protein, while the 4 small subunits are PetG, PetL, PetM and PetN. The complex functions as a dimer.

It is found in the plastid. The protein resides in the chloroplast thylakoid membrane. In terms of biological role, component of the cytochrome b6-f complex, which mediates electron transfer between photosystem II (PSII) and photosystem I (PSI), cyclic electron flow around PSI, and state transitions. The sequence is that of Cytochrome b6-f complex subunit 8 from Illicium oligandrum (Star anise).